Consider the following 308-residue polypeptide: D-alanine--D-alanine ligase (308 aa).

An ATP-grasp domain is found at 108–303 (KLVWKAAGLP…YEALCLKVLE (196 aa)). 134 to 189 (EAELGLPMFVKPACEGSSLGVTKVRKAGELAQAYAEARKFDPLVLAEQFVGGGEYT) is an ATP binding site. 3 residues coordinate Mg(2+): Asp257, Glu270, and Asn272.

This sequence belongs to the D-alanine--D-alanine ligase family. The cofactor is Mg(2+). It depends on Mn(2+) as a cofactor.

The protein localises to the cytoplasm. It carries out the reaction 2 D-alanine + ATP = D-alanyl-D-alanine + ADP + phosphate + H(+). The protein operates within cell wall biogenesis; peptidoglycan biosynthesis. Functionally, cell wall formation. This Laribacter hongkongensis (strain HLHK9) protein is D-alanine--D-alanine ligase.